The following is a 102-amino-acid chain: MANKKIRIRLKAYEHRTLDTAAAKIVETATRTGAQVAGPVPLPTERSFYTIIRATHKYKDSREQFEMRTHKRLIDIINPTQKTVDALMKLDLPSGVNVEIKL.

It belongs to the universal ribosomal protein uS10 family. In terms of assembly, part of the 30S ribosomal subunit.

In terms of biological role, involved in the binding of tRNA to the ribosomes. This is Small ribosomal subunit protein uS10 from Streptococcus suis (strain 98HAH33).